A 198-amino-acid chain; its full sequence is Recombination protein RecR (198 aa).

The C4-type zinc finger occupies 57–72; it reads CSICGNLTESDPCAIC. Residues 80–175 form the Toprim domain; the sequence is TTILVVEESK…KVTRLARGLA (96 aa).

Belongs to the RecR family.

In terms of biological role, may play a role in DNA repair. It seems to be involved in an RecBC-independent recombinational process of DNA repair. It may act with RecF and RecO. The protein is Recombination protein RecR of Lactococcus lactis subsp. lactis (strain IL1403) (Streptococcus lactis).